The sequence spans 118 residues: UPF0102 protein STH1475 (118 aa).

Belongs to the UPF0102 family.

The protein is UPF0102 protein STH1475 of Symbiobacterium thermophilum (strain DSM 24528 / JCM 14929 / IAM 14863 / T).